Here is a 232-residue protein sequence, read N- to C-terminus: Small ribosomal subunit protein uS3 (232 aa).

Residues 39–107 (VRQFLTKELA…PAQINIAEVR (69 aa)) form the KH type-2 domain.

Belongs to the universal ribosomal protein uS3 family. In terms of assembly, part of the 30S ribosomal subunit. Forms a tight complex with proteins S10 and S14.

Its function is as follows. Binds the lower part of the 30S subunit head. Binds mRNA in the 70S ribosome, positioning it for translation. In Yersinia pseudotuberculosis serotype O:1b (strain IP 31758), this protein is Small ribosomal subunit protein uS3.